A 529-amino-acid chain; its full sequence is Cytochrome P450 monooxygenase 136 (529 aa).

A helical membrane pass occupies residues 9-29 (SPLALAVLSIATCQLALVWWY). Cys447 lines the heme pocket.

Belongs to the cytochrome P450 family. The cofactor is heme.

It localises to the membrane. The protein operates within secondary metabolite biosynthesis. Cytochrome P450 monooxygenase that is able to use delta(6)-protoilludene as a substrate to produce delta(6)-protoilludene-5-ol. This chain is Cytochrome P450 monooxygenase 136, found in Postia placenta (strain ATCC 44394 / Madison 698-R) (Brown rot fungus).